We begin with the raw amino-acid sequence, 455 residues long: GTPase Der (455 aa).

EngA-type G domains lie at 3-167 and 184-359; these read FTIA…PEPA and IRVA…AVWN. Residues 9 to 16, 56 to 60, 119 to 122, 190 to 197, 237 to 241, and 302 to 305 contribute to the GTP site; these read GRPNVGKS, DTAGL, NKSE, GRPNAGKS, and NKWD. Residues 360-444 enclose the KH-like domain; that stretch reads RRVATALLNR…PIRITLREKA (85 aa).

The protein belongs to the TRAFAC class TrmE-Era-EngA-EngB-Septin-like GTPase superfamily. EngA (Der) GTPase family. In terms of assembly, associates with the 50S ribosomal subunit.

Functionally, GTPase that plays an essential role in the late steps of ribosome biogenesis. This Nitrobacter winogradskyi (strain ATCC 25391 / DSM 10237 / CIP 104748 / NCIMB 11846 / Nb-255) protein is GTPase Der.